A 492-amino-acid chain; its full sequence is UDP-N-acetylmuramate--L-alanine ligase (492 aa).

126-132 contributes to the ATP binding site; it reads GTHGKTT.

This sequence belongs to the MurCDEF family.

Its subcellular location is the cytoplasm. The enzyme catalyses UDP-N-acetyl-alpha-D-muramate + L-alanine + ATP = UDP-N-acetyl-alpha-D-muramoyl-L-alanine + ADP + phosphate + H(+). The protein operates within cell wall biogenesis; peptidoglycan biosynthesis. Cell wall formation. The polypeptide is UDP-N-acetylmuramate--L-alanine ligase (Serratia proteamaculans (strain 568)).